The chain runs to 171 residues: Deoxyuridine 5'-triphosphate nucleotidohydrolase (171 aa).

E143 lines the Mg(2+) pocket.

This sequence belongs to the dUTPase family. As to quaternary structure, homotrimer. Mg(2+) serves as cofactor.

The catalysed reaction is dUTP + H2O = dUMP + diphosphate + H(+). It participates in pyrimidine metabolism; dUMP biosynthesis; dUMP from dCTP (dUTP route): step 2/2. This enzyme is involved in nucleotide metabolism: it produces dUMP, the immediate precursor of thymidine nucleotides and it decreases the intracellular concentration of dUTP, preventing uracil incorporation into DNA. The polypeptide is Deoxyuridine 5'-triphosphate nucleotidohydrolase (DUT) (Oryza sativa subsp. japonica (Rice)).